We begin with the raw amino-acid sequence, 425 residues long: MQQTFFKDPILGEIIFDENTKWMYELVNTKAFQRLRNIKQLGINFHFYPSGVHTRYAHSLGVYELIRRILNSSAFLNIDQIKKQTVLVAGLLHDLGHGPHSHAFEIYFAKNPDFKKQLFIHEKVTSMLVNSEPIVSILKANKIDPNLIGALIDENQNIQPINWWMRQLISSDLDTDRMDYLLRDAYFTGTSHSLVDYQSIINGMECVDNQGTYEIVFQEKCLPFIENFLITRHHMYQSIYSDGRSIATELNLWFVFQRIKALIEEDNFNFHNFKNVESVIKPLLKNQLFKKSLLTCFVKLDDYVFHSFLVNTFETTKDAILKTLLDSYLNTLKFQVKFYESCEKRDLDFELKVKEYQTPSYFITKFNNQFKGFYEGWNKHKNELKIKTSQNKIKNLSEISMLVKRSNELFFENSFYRWANVFYQN.

An HD domain is found at 55-181 (RYAHSLGVYE…DLDTDRMDYL (127 aa)).

This is an uncharacterized protein from Mycoplasma genitalium (strain ATCC 33530 / DSM 19775 / NCTC 10195 / G37) (Mycoplasmoides genitalium).